We begin with the raw amino-acid sequence, 182 residues long: Doublesex- and mab-3-related transcription factor C1 (182 aa).

A Phosphoserine modification is found at threonine 15. Positions 26–39 (AQVDTATQEESSQG) are enriched in polar residues. Disordered stretches follow at residues 26-48 (AQVD…QHPE) and 136-174 (QTRH…PSGH).

It belongs to the DMRT family. As to expression, expressed in Sertoli cells in male testis.

The polypeptide is Doublesex- and mab-3-related transcription factor C1 (Dmrtc1) (Mus musculus (Mouse)).